A 480-amino-acid polypeptide reads, in one-letter code: Phosphoglucosamine mutase (480 aa).

Residues 1 to 41 form a disordered region; it reads MPKHTKKDPREGAPSATGEPQKQAAGRKLFGTDGVRGVANQ. The active-site Phosphoserine intermediate is the S127. Mg(2+) contacts are provided by S127, D269, D271, and D273. Residue S127 is modified to Phosphoserine.

Belongs to the phosphohexose mutase family. Requires Mg(2+) as cofactor. Activated by phosphorylation.

It carries out the reaction alpha-D-glucosamine 1-phosphate = D-glucosamine 6-phosphate. Its function is as follows. Catalyzes the conversion of glucosamine-6-phosphate to glucosamine-1-phosphate. This is Phosphoglucosamine mutase from Sorangium cellulosum (strain So ce56) (Polyangium cellulosum (strain So ce56)).